A 763-amino-acid chain; its full sequence is ATP-dependent Clp protease ATP-binding subunit ClpL (763 aa).

The tract at residues 136 to 386 (IEKLGTNLTE…FSGKNSQTDV (251 aa)) is i. Residues 181-188 (GESGVGKT) and 511-518 (GPTGVGKT) each bind ATP. An II region spans residues 437–629 (ATIDDVAQSV…IIIMTSNAGF (193 aa)).

It belongs to the ClpA/ClpB family.

Its function is as follows. Could be the ATP-dependent specificity component of an ATP-dependent protease. This chain is ATP-dependent Clp protease ATP-binding subunit ClpL (clpL), found in Lactococcus lactis subsp. lactis (Streptococcus lactis).